The chain runs to 220 residues: Protein-L-isoaspartate O-methyltransferase (220 aa).

Residue S64 is part of the active site.

This sequence belongs to the methyltransferase superfamily. L-isoaspartyl/D-aspartyl protein methyltransferase family.

It is found in the cytoplasm. The catalysed reaction is [protein]-L-isoaspartate + S-adenosyl-L-methionine = [protein]-L-isoaspartate alpha-methyl ester + S-adenosyl-L-homocysteine. Functionally, catalyzes the methyl esterification of L-isoaspartyl residues in peptides and proteins that result from spontaneous decomposition of normal L-aspartyl and L-asparaginyl residues. It plays a role in the repair and/or degradation of damaged proteins. The sequence is that of Protein-L-isoaspartate O-methyltransferase from Thermococcus onnurineus (strain NA1).